Here is a 539-residue protein sequence, read N- to C-terminus: ATP synthase subunit beta (539 aa).

The tract at residues 1 to 44 is disordered; sequence MAKTPAEKPATAAKKPAAPKAAAAPKAAAAKAPAAAKAPAAKKP. 212 to 219 is an ATP binding site; that stretch reads GGAGVGKT.

It belongs to the ATPase alpha/beta chains family. In terms of assembly, F-type ATPases have 2 components, CF(1) - the catalytic core - and CF(0) - the membrane proton channel. CF(1) has five subunits: alpha(3), beta(3), gamma(1), delta(1), epsilon(1). CF(0) has three main subunits: a(1), b(2) and c(9-12). The alpha and beta chains form an alternating ring which encloses part of the gamma chain. CF(1) is attached to CF(0) by a central stalk formed by the gamma and epsilon chains, while a peripheral stalk is formed by the delta and b chains.

It localises to the cell inner membrane. The catalysed reaction is ATP + H2O + 4 H(+)(in) = ADP + phosphate + 5 H(+)(out). Its function is as follows. Produces ATP from ADP in the presence of a proton gradient across the membrane. The catalytic sites are hosted primarily by the beta subunits. This is ATP synthase subunit beta from Caulobacter vibrioides (strain ATCC 19089 / CIP 103742 / CB 15) (Caulobacter crescentus).